The sequence spans 447 residues: Methylenetetrahydrofolate--tRNA-(uracil-5-)-methyltransferase TrmFO (447 aa).

10-15 (GAGLAG) lines the FAD pocket.

The protein belongs to the MnmG family. TrmFO subfamily. The cofactor is FAD.

The protein localises to the cytoplasm. The catalysed reaction is uridine(54) in tRNA + (6R)-5,10-methylene-5,6,7,8-tetrahydrofolate + NADH + H(+) = 5-methyluridine(54) in tRNA + (6S)-5,6,7,8-tetrahydrofolate + NAD(+). It carries out the reaction uridine(54) in tRNA + (6R)-5,10-methylene-5,6,7,8-tetrahydrofolate + NADPH + H(+) = 5-methyluridine(54) in tRNA + (6S)-5,6,7,8-tetrahydrofolate + NADP(+). Its function is as follows. Catalyzes the folate-dependent formation of 5-methyl-uridine at position 54 (M-5-U54) in all tRNAs. The chain is Methylenetetrahydrofolate--tRNA-(uracil-5-)-methyltransferase TrmFO from Lactococcus lactis subsp. lactis (strain IL1403) (Streptococcus lactis).